We begin with the raw amino-acid sequence, 61 residues long: Large ribosomal subunit protein bL32 (61 aa).

A compositionally biased stretch (basic residues) spans 1–18 (MAIVPKRKTSKQRKRKRQ). The interval 1–20 (MAIVPKRKTSKQRKRKRQTH) is disordered.

The protein belongs to the bacterial ribosomal protein bL32 family.

The sequence is that of Large ribosomal subunit protein bL32 (rpmF) from Mycoplasmopsis pulmonis (strain UAB CTIP) (Mycoplasma pulmonis).